The following is a 188-amino-acid chain: Elongation factor P (188 aa).

An N6-(3,6-diaminohexanoyl)-5-hydroxylysine modification is found at Lys34.

Belongs to the elongation factor P family. May be beta-lysylated on the epsilon-amino group of Lys-34 by the combined action of EpmA and EpmB, and then hydroxylated on the C5 position of the same residue by EpmC (if this protein is present). Lysylation is critical for the stimulatory effect of EF-P on peptide-bond formation. The lysylation moiety may extend toward the peptidyltransferase center and stabilize the terminal 3-CCA end of the tRNA. Hydroxylation of the C5 position on Lys-34 may allow additional potential stabilizing hydrogen-bond interactions with the P-tRNA.

It is found in the cytoplasm. Its pathway is protein biosynthesis; polypeptide chain elongation. Functionally, involved in peptide bond synthesis. Alleviates ribosome stalling that occurs when 3 or more consecutive Pro residues or the sequence PPG is present in a protein, possibly by augmenting the peptidyl transferase activity of the ribosome. Modification of Lys-34 is required for alleviation. This Actinobacillus succinogenes (strain ATCC 55618 / DSM 22257 / CCUG 43843 / 130Z) protein is Elongation factor P.